A 103-amino-acid polypeptide reads, in one-letter code: UPF0235 protein RHECIAT_CH0004196 (103 aa).

This sequence belongs to the UPF0235 family.

This Rhizobium etli (strain CIAT 652) protein is UPF0235 protein RHECIAT_CH0004196.